The sequence spans 125 residues: Protein ApaG (125 aa).

The 125-residue stretch at 1 to 125 (MIDSPRVCVQ…FRLAVPTFIH (125 aa)) folds into the ApaG domain.

This Enterobacter sp. (strain 638) protein is Protein ApaG.